The chain runs to 165 residues: Large ribosomal subunit protein uL10 (165 aa).

It belongs to the universal ribosomal protein uL10 family. Part of the ribosomal stalk of the 50S ribosomal subunit. The N-terminus interacts with L11 and the large rRNA to form the base of the stalk. The C-terminus forms an elongated spine to which L12 dimers bind in a sequential fashion forming a multimeric L10(L12)X complex.

In terms of biological role, forms part of the ribosomal stalk, playing a central role in the interaction of the ribosome with GTP-bound translation factors. The sequence is that of Large ribosomal subunit protein uL10 from Paraburkholderia phymatum (strain DSM 17167 / CIP 108236 / LMG 21445 / STM815) (Burkholderia phymatum).